The sequence spans 375 residues: Flagellin (375 aa).

Belongs to the bacterial flagellin family.

The protein localises to the secreted. It localises to the bacterial flagellum. Flagellin is the subunit protein which polymerizes to form the filaments of bacterial flagella. Flagella are an important component in the invasiveness of B.bacilliformis. In Bartonella bacilliformis, this protein is Flagellin.